Here is a 466-residue protein sequence, read N- to C-terminus: Coagulation factor VII (466 aa).

The first 20 residues, 1 to 20, serve as a signal peptide directing secretion; it reads MVSQALRLLCLLLGLQGCLA. Positions 21–60 are excised as a propeptide; that stretch reads AGGVAKASGGETRDMPWKPGPHRVFVTQEEAHGVLHRRRR. Residues 61 to 105 form the Gla domain; that stretch reads ANAFLEELRPGSLERECKEEQCSFEEAREIFKDAERTKLFWISYS. 10 positions are modified to 4-carboxyglutamate: E66, E67, E74, E76, E79, E80, E85, E86, E89, and E95. Residues C77 and C82 are joined by a disulfide bond. One can recognise an EGF-like 1; calcium-binding domain in the interval 106-142; it reads DGDQCASSPCQNGGSCKDQLQSYICFCLPAFEGRNCE. 10 cysteine pairs are disulfide-bonded: C110–C121, C115–C130, C132–C141, C151–C162, C158–C172, C174–C187, C195–C322, C219–C224, C238–C254, and C370–C389. O-linked (Glc...) serine; alternate glycosylation occurs at S112. O-linked (Xyl...) serine; alternate glycosylation is present at S112. S120 carries O-linked (Fuc) serine glycosylation. D123 bears the (3R)-3-hydroxyaspartate mark. The 42-residue stretch at 147 to 188 folds into the EGF-like 2 domain; sequence DQLICVNENGGCEQYCSDHTGTKRSCRCHEGYSLLADGVSCT. A glycan (N-linked (GlcNAc...) asparagine) is linked at N205. A Peptidase S1 domain is found at 213–452; sequence IVGGKVCPKG…YIEWLQKLMR (240 aa). Residues H253 and D302 each act as charge relay system in the active site. The N-linked (GlcNAc...) asparagine glycan is linked to N382. D398 provides a ligand contact to substrate. C400 and C428 are oxidised to a cystine. S404 serves as the catalytic Charge relay system.

This sequence belongs to the peptidase S1 family. In terms of assembly, heterodimer of a light chain and a heavy chain linked by a disulfide bond. Interacts (activated) with iripin-8, a serine protease inhibitor from Ixodes ricinus saliva. The vitamin K-dependent, enzymatic carboxylation of some glutamate residues allows the modified protein to bind calcium. In terms of processing, the iron and 2-oxoglutarate dependent 3-hydroxylation of aspartate and asparagine is (R) stereospecific within EGF domains. Post-translationally, O- and N-glycosylated. N-glycosylation at Asn-205 occurs cotranslationally and is mediated by STT3A-containing complexes, while glycosylation at Asn-382 is post-translational and is mediated STT3B-containing complexes before folding. O-fucosylated by POFUT1 on a conserved serine or threonine residue found in the consensus sequence C2-X(4,5)-[S/T]-C3 of EGF domains, where C2 and C3 are the second and third conserved cysteines. Can be either O-glucosylated or O-xylosylated at Ser-112 by POGLUT1 in vitro. As to expression, plasma.

It is found in the secreted. The catalysed reaction is Selective cleavage of Arg-|-Ile bond in factor X to form factor Xa.. In terms of biological role, initiates the extrinsic pathway of blood coagulation. Serine protease that circulates in the blood in a zymogen form. Factor VII is converted to factor VIIa by factor Xa, factor XIIa, factor IXa, or thrombin by minor proteolysis. In the presence of tissue factor and calcium ions, factor VIIa then converts factor X to factor Xa by limited proteolysis. Factor VIIa also converts factor IX to factor IXa in the presence of tissue factor and calcium. This chain is Coagulation factor VII (F7), found in Homo sapiens (Human).